The following is a 620-amino-acid chain: Ran-binding protein 10 (620 aa).

Residues 1–34 (MAAATADPGAGSPQVGDSSGGATGCGLPSPGEQE) are disordered. The residue at position 2 (Ala2) is an N-acetylalanine. The B30.2/SPRY domain maps to 35-222 (LSRRLQRLYP…VDANFGQQPF (188 aa)). The LisH domain occupies 253–285 (WQAVLQNMVSSYLVHHGYCATATAFARMTETPI). The CTLH domain maps to 291–348 (SIKNRQKIQKLVLEGRVGEAIETTQRFYPGLLEHNPNLLFMLKCRQFVEMVNGTDSEV). The span at 347–398 (EVRSLSSRSPKSQDSYPGSPSLSPRHGPTSSHTHNTGADSPSCSNGVASTKS) shows a compositional bias: polar residues. A disordered region spans residues 347–459 (EVRSLSSRSP…TSDSEMEMEA (113 aa)). Phosphoserine is present on Ser361. Tyr362 carries the post-translational modification Phosphotyrosine. Ser365, Ser367, Ser369, and Ser422 each carry phosphoserine. Low complexity predominate over residues 409–436 (SSSSSSSSSSSSSSPSSVNYSESNSTDS). The segment covering 437–450 (TKSQPHSSTSNQET) has biased composition (polar residues). 2 positions are modified to phosphoserine: Ser451 and Ser453.

It belongs to the RANBP9/10 family. In terms of assembly, may form homodimers. Identified in the CTLH complex that contains GID4, RANBP9 and/or RANBP10, MKLN1, MAEA, RMND5A (or alternatively its paralog RMND5B), GID8, ARMC8, WDR26 and YPEL5. Within this complex, MAEA, RMND5A (or alternatively its paralog RMND5B), GID8, WDR26, and RANBP9 and/or RANBP10 form the catalytic core, while GID4, MKLN1, ARMC8 and YPEL5 have ancillary roles. Interacts with RAN and RANBP9. Interacts with the HGF receptor MET. Interacts with AR. Interacts with TUBB1. Interacts with YPEL5. May interact with TUBB5. Interacts with DDX4.

Its subcellular location is the cytoplasm. It localises to the cytosol. The protein resides in the nucleus. In terms of biological role, may act as an adapter protein to couple membrane receptors to intracellular signaling pathways. Core component of the CTLH E3 ubiquitin-protein ligase complex that selectively accepts ubiquitin from UBE2H and mediates ubiquitination and subsequent proteasomal degradation of the transcription factor HBP1. Enhances dihydrotestosterone-induced transactivation activity of AR, as well as dexamethasone-induced transactivation activity of NR3C1, but does not affect estrogen-induced transactivation. Acts as a guanine nucleotide exchange factor (GEF) for RAN GTPase. May play an essential role in hemostasis and in maintaining microtubule dynamics with respect to both platelet shape and function. The chain is Ran-binding protein 10 (RANBP10) from Bos taurus (Bovine).